The following is a 280-amino-acid chain: HCLS1-associated protein X-1 (280 aa).

Ser2 carries the post-translational modification N-acetylserine. The segment at 2-45 (SVFDLFRGFFGFPGPRSHRDPFFGGMTRDDDDDDDDDDEAEEDR) is required for localization in mitochondria. Disordered stretches follow at residues 12–70 (GFPG…SFSP) and 100–263 (TLPS…SALD). Residues 30 to 43 (DDDDDDDDDDEAEE) show a composition bias toward acidic residues. Residues 115 to 280 (TPGERLREGQ…LLLGRWFRSR (166 aa)) are involved in HCLS1 binding. Basic and acidic residues-rich tracts occupy residues 116–125 (PGERLREGQT) and 134–154 (PDSHQPRIFEGVLESHAKPES). Positions 176–207 (VSPHSRAKEDKDLDSQVSQEGLGPLLQPQPKS) are involved in CASP9 binding. Positions 177–248 (SPHSRAKEDK…TTVTHQEAHD (72 aa)) are involved in GNA13 binding. The required for localization in sarcoplasmic reticulum stretch occupies residues 184 to 280 (EDKDLDSQVS…LLLGRWFRSR (97 aa)). The segment at 185–280 (DKDLDSQVSQ…LLLGRWFRSR (96 aa)) is involved in PKD2 binding. Phosphoserine occurs at positions 190 and 193. An involved in PLN binding region spans residues 204-226 (QPKSYFKSISVTKITKPDGTVEE). The tract at residues 204-246 (QPKSYFKSISVTKITKPDGTVEERRTVVDSEGRRETTVTHQEA) is involved in ATP2A2 binding. The mediates interaction with UCP3 stretch occupies residues 211-280 (SISVTKITKP…LLLGRWFRSR (70 aa)). Positions 218 to 256 (TKPDGTVEERRTVVDSEGRRETTVTHQEAHDSSRSDPDS) are enriched in basic and acidic residues. The interval 271–280 (LLLGRWFRSR) is required for ITGB6 binding.

It belongs to the HAX1 family. As to quaternary structure, interacts with ABCB1, ABCB4 and ABCB11. Directly associates with HCLS1/HS1, through binding to its N-terminal region. Interacts with CTTN. Interacts with PKD2. Interacts with GNA13. Interacts with CASP9. Interacts with ITGB6. Interacts with PLN and ATP2A2; these interactions are inhibited by calcium. Interacts with GRB7. Interacts (via C-terminus) with XIAP/BIRC4 (via BIR 2 domain and BIR 3 domain) and this interaction blocks ubiquitination of XIAP/BIRC4. Interacts with TPC2. Interacts with KCNC3. Interacts with XPO1. Interacts with RNF217. Interacts with UCP3; the interaction is direct and calcium-dependent. Interacts with MAPRE2; this interaction regulates cell migration in keratinocytes. As to expression, ubiquitous, with highest levels in kidney and liver (at protein level).

Its subcellular location is the mitochondrion matrix. The protein resides in the endoplasmic reticulum. The protein localises to the nucleus membrane. It localises to the cytoplasmic vesicle. It is found in the cytoplasm. Its subcellular location is the cell cortex. The protein resides in the cell membrane. The protein localises to the sarcoplasmic reticulum. It localises to the P-body. It is found in the nucleus. Recruits the Arp2/3 complex to the cell cortex and regulates reorganization of the cortical actin cytoskeleton via its interaction with KCNC3 and the Arp2/3 complex. Slows down the rate of inactivation of KCNC3 channels. Promotes GNA13-mediated cell migration. Involved in the clathrin-mediated endocytosis pathway. May be involved in internalization of ABC transporters such as ABCB11. May inhibit CASP9 and CASP3. Promotes cell survival. May regulate intracellular calcium pools. The sequence is that of HCLS1-associated protein X-1 (Hax1) from Mus musculus (Mouse).